A 266-amino-acid polypeptide reads, in one-letter code: Prolactin-7A1 (266 aa).

Residues 1–30 (MPLSFTQPCSSGALLLLVVSNLLLWENVAC) form the signal peptide. N-linked (GlcNAc...) asparagine glycans are attached at residues N36, N58, N110, N149, and N157. Intrachain disulfides connect C114-C231 and C248-C257.

This sequence belongs to the somatotropin/prolactin family. Expressed specifically in the placenta. Detected only in the trophoblast giant cells.

It is found in the secreted. This chain is Prolactin-7A1 (Prl7a1), found in Mus musculus (Mouse).